An 822-amino-acid polypeptide reads, in one-letter code: Protein smoothened (822 aa).

An N-terminal signal peptide occupies residues 1 to 28 (MSSKRPCSIVGSFWMLWIWTATSMVARA). Residues 29-212 (VILHPNETIF…EDEHSDMHSY (184 aa)) are Extracellular-facing. The N-linked (GlcNAc...) asparagine glycan is linked to Asn-34. Cystine bridges form between Cys-42–Cys-157, Cys-48–Cys-112, Cys-56–Cys-105, Cys-96–Cys-132, and Cys-125–Cys-147. An FZ domain is found at 43–160 (KKSTTCEVLK…EQFPKGCQNE (118 aa)). Residue Asp-73 coordinates cholesterol. An N-linked (GlcNAc...) asparagine glycan is attached at Asn-167. 3 disulfides stabilise this stretch: Cys-172–Cys-192, Cys-196–Cys-274, and Cys-293–Cys-369. Residues 213–233 (IAVFGTITLLCTFFTLATFLA) traverse the membrane as a helical segment. Topologically, residues 234–241 (DWKNSNRY) are cytoplasmic. The helical transmembrane segment at 242–262 (PAVILFYVNACFFIGSIGWLA) threads the bilayer. Topologically, residues 263 to 293 (QFMDGARNEIVCKSDNTMRLGEPSSTETLSC) are extracellular. A helical transmembrane segment spans residues 294–314 (VIIFVIVYYSLMSGVIWFVML). Topologically, residues 315–335 (TYAWHTSFKALGTTHQPLSGK) are cytoplasmic. The chain crosses the membrane as a helical span at residues 336 to 356 (TSYFHLVTWSIPFILTVAILA). At 357–381 (NSQVDADSVSGICFVGYRYYEYRAG) the chain is on the extracellular side. A cholesterol-binding site is contributed by Tyr-373. A helical transmembrane segment spans residues 382 to 402 (FVLAPIGFVLVIGGYFLIRGV). Topologically, residues 403–430 (MTLFSIKSNHPGLLSEKAASKINETMLR) are cytoplasmic. The chain crosses the membrane as a helical span at residues 431–451 (LGIFGFLAFGFVLITFGCHFY). Residues 452-503 (DFFNQAEWERSFREYVLCEANVTIAHQTNKPIPECAIKNRPSLLVGKINLFS) are Extracellular-facing. A disulfide bond links Cys-469 and Cys-486. Asn-472 carries N-linked (GlcNAc...) asparagine glycosylation. A helical membrane pass occupies residues 504-524 (MFGTGIAMSTWVWTKATILIW). Residues 525–822 (KRTWFRIIGR…AELLDADSDF (298 aa)) lie on the Cytoplasmic side of the membrane. A disordered region spans residues 645–687 (MMKRKKKKKKRRKEVRPAGPAADEGNPAYHRREFGPSAVPRLP). Residues 647–658 (KRKKKKKKRRKE) show a composition bias toward basic residues.

This sequence belongs to the G-protein coupled receptor Fz/Smo family. As to quaternary structure, monomer.

It is found in the cell membrane. Its subcellular location is the cell projection. It localises to the cilium. Functionally, g protein-coupled receptor which associates with the patched protein (ptch) to transduce Hedgehog protein signaling. Binding of sonic hedgehog (shh) to its receptor patched prevents inhibition of smoothened (smo) by patched. When active, smo binds to and sequesters protein kinase A catalytic subunit prkaca at the cell membrane, preventing prkaca-mediated phosphorylation of gli transcription factors which releases the gli proteins from prkaca-mediated inhibition and allows for transcriptional activation of Hedgehog signaling pathway target genes. Required for the development of primary and secondary motoneurons but not for the specification of midbrain dopaminergic neurons or development of the medial floor plate. Required for induction of lateral floor plate and posterior motoneurons, anterior neural plate patterning, dorsoventral forebrain patterning, dorsoventral retinal patterning, optic stalk development, and formation of the forebrain primary axonal scaffold. Required to regulate the formation of a subset of cerebellar neurons by limiting wnt1 expression which controls cerebellar expression of transcription factor olig2. Required for development of the pancreas. Required for muscle development. Required for the formation of a single continuous intestinal lumen from multiple discontinuous lumens, probably by regulating remodeling through rab11a-mediated trafficking to facilitate lumen fusion. Required for development of the adenohypophysis. Required for anteroposterior patterning of the otic vesicle. Required for development of the anterior craniofacial skeleton. Required for patterning of the caudal fin. Required during gastrulation and early somitogenesis stages to promote cardiomyocyte formation by regulating the specification of myocardial progenitors. Required for induction of arterial endothelial cell formation by repressing venous cell fate. The polypeptide is Protein smoothened (Danio rerio (Zebrafish)).